We begin with the raw amino-acid sequence, 124 residues long: Large ribosomal subunit protein eL31 (124 aa).

Belongs to the eukaryotic ribosomal protein eL31 family. Component of the large ribosomal subunit.

It localises to the cytoplasm. In terms of biological role, component of the large ribosomal subunit. The ribosome is a large ribonucleoprotein complex responsible for the synthesis of proteins in the cell. The protein is Large ribosomal subunit protein eL31 (rpl31) of Paralichthys olivaceus (Bastard halibut).